The sequence spans 520 residues: 2-isopropylmalate synthase (520 aa).

The 263-residue stretch at 12–274 (VVIFDTTLRD…WCNVESTMLT (263 aa)) folds into the Pyruvate carboxyltransferase domain. Mn(2+) is bound by residues aspartate 21, histidine 209, histidine 211, and asparagine 245. Residues 398-520 (KLTSLTVIAG…RDVPSAAAAS (123 aa)) form a regulatory domain region.

This sequence belongs to the alpha-IPM synthase/homocitrate synthase family. LeuA type 1 subfamily. Homodimer. It depends on Mn(2+) as a cofactor.

Its subcellular location is the cytoplasm. It catalyses the reaction 3-methyl-2-oxobutanoate + acetyl-CoA + H2O = (2S)-2-isopropylmalate + CoA + H(+). It participates in amino-acid biosynthesis; L-leucine biosynthesis; L-leucine from 3-methyl-2-oxobutanoate: step 1/4. In terms of biological role, catalyzes the condensation of the acetyl group of acetyl-CoA with 3-methyl-2-oxobutanoate (2-ketoisovalerate) to form 3-carboxy-3-hydroxy-4-methylpentanoate (2-isopropylmalate). The polypeptide is 2-isopropylmalate synthase (Nitrobacter hamburgensis (strain DSM 10229 / NCIMB 13809 / X14)).